Consider the following 148-residue polypeptide: UPF0178 protein CA_C2825 (148 aa).

Belongs to the UPF0178 family.

The protein is UPF0178 protein CA_C2825 of Clostridium acetobutylicum (strain ATCC 824 / DSM 792 / JCM 1419 / IAM 19013 / LMG 5710 / NBRC 13948 / NRRL B-527 / VKM B-1787 / 2291 / W).